The sequence spans 236 residues: T-cell surface glycoprotein CD8 alpha chain (236 aa).

A signal peptide spans 1 to 26 (MASRVICFLSLNLLLLDVITRLQVSG). Residues 27-130 (QLQLSPKKVD…ITSNSVMYFS (104 aa)) enclose the Ig-like V-type domain. Residues 27–189 (QLQLSPKKVD…MGLGFACDIY (163 aa)) are Extracellular-facing. Cys-47 and Cys-119 are oxidised to a cystine. N-linked (GlcNAc...) asparagine glycosylation occurs at Asn-63. O-linked (GalNAc...) threonine; partial glycosylation occurs at Thr-144. 4 O-linked (GalNAc...) threonine glycosylation sites follow: Thr-148, Thr-152, Thr-158, and Thr-160. The interval 150–170 (APTPVPPPTGTPRPLRPEACR) is disordered. A helical transmembrane segment spans residues 190–210 (IWAPLAGICAVLLLSLVITLI). A lipid anchor (S-palmitoyl cysteine) is attached at Cys-211. Residues 211 to 236 (CCHRNRRRVCKCPRPLVKPRPSEKFV) lie on the Cytoplasmic side of the membrane.

As to quaternary structure, forms disulfide-linked heterodimers with CD8B at the cell surface. Also forms homodimers in several cell types including NK-cells or peripheral blood T-lymphocytes. Interacts with the MHC class I HLA-A/B2M dimer. Interacts with LCK in a zinc-dependent manner. Palmitoylated, but association with CD8B seems to be more important for the enrichment of CD8A in lipid rafts. Post-translationally, O-glycosylated. In terms of processing, phosphorylated in cytotoxic T-lymphocytes (CTLs) following activation.

Its subcellular location is the cell membrane. Functionally, integral membrane glycoprotein that plays an essential role in the immune response and serves multiple functions in responses against both external and internal offenses. In T-cells, functions primarily as a coreceptor for MHC class I molecule:peptide complex. The antigens presented by class I peptides are derived from cytosolic proteins while class II derived from extracellular proteins. Interacts simultaneously with the T-cell receptor (TCR) and the MHC class I proteins presented by antigen presenting cells (APCs). In turn, recruits the Src kinase LCK to the vicinity of the TCR-CD3 complex. LCK then initiates different intracellular signaling pathways by phosphorylating various substrates ultimately leading to lymphokine production, motility, adhesion and activation of cytotoxic T-lymphocytes (CTLs). This mechanism enables CTLs to recognize and eliminate infected cells and tumor cells. In NK-cells, the presence of CD8A homodimers at the cell surface provides a survival mechanism allowing conjugation and lysis of multiple target cells. CD8A homodimer molecules also promote the survival and differentiation of activated lymphocytes into memory CD8 T-cells. This Rattus norvegicus (Rat) protein is T-cell surface glycoprotein CD8 alpha chain (Cd8a).